We begin with the raw amino-acid sequence, 306 residues long: MMEKRRPVVCILGPTGAGKTATSLGMARKFPVRVINFDSRQVYTDFPVITAQPSPEERAVCPHELYGFLPTTETINASGFVDLAKERIDAAEAGELPVLVGGTGMYLQSLISGLAPIPDIPDEIRERIRKRSEEEGGPALYAELEKVDPEYCKRTHPNNRQRNARALEVYEATGKPFSWWHNREVPPSPYNFLKIGIKVDLDELTPLLKLRIEKMLEAGAVEEARKAWENCPDENAPGWTGIGCIELMRYIKGEIDLDETIRLWAKNTRAYAKRQLTWFKREKDIHWFAPHEYDKAVTFVGQWLAD.

13–20 (GPTGAGKT) provides a ligand contact to ATP. 15–20 (TGAGKT) is a binding site for substrate. 2 interaction with substrate tRNA regions span residues 38–41 (DSRQ) and 161–165 (QRNAR).

The protein belongs to the IPP transferase family. In terms of assembly, monomer. Mg(2+) is required as a cofactor.

The catalysed reaction is adenosine(37) in tRNA + dimethylallyl diphosphate = N(6)-dimethylallyladenosine(37) in tRNA + diphosphate. Functionally, catalyzes the transfer of a dimethylallyl group onto the adenine at position 37 in tRNAs that read codons beginning with uridine, leading to the formation of N6-(dimethylallyl)adenosine (i(6)A). This is tRNA dimethylallyltransferase from Maridesulfovibrio salexigens (strain ATCC 14822 / DSM 2638 / NCIMB 8403 / VKM B-1763) (Desulfovibrio salexigens).